Consider the following 261-residue polypeptide: tRNA (guanine-N(7)-)-methyltransferase (261 aa).

Residues E75, E100, D127, and D150 each contribute to the S-adenosyl-L-methionine site. D150 is an active-site residue. K154 provides a ligand contact to substrate. Residues 156-161 (RHNKRR) are interaction with RNA. Substrate contacts are provided by residues D186 and 223–226 (THFE).

Belongs to the class I-like SAM-binding methyltransferase superfamily. TrmB family.

The enzyme catalyses guanosine(46) in tRNA + S-adenosyl-L-methionine = N(7)-methylguanosine(46) in tRNA + S-adenosyl-L-homocysteine. It functions in the pathway tRNA modification; N(7)-methylguanine-tRNA biosynthesis. Its function is as follows. Catalyzes the formation of N(7)-methylguanine at position 46 (m7G46) in tRNA. This chain is tRNA (guanine-N(7)-)-methyltransferase, found in Xanthomonas campestris pv. campestris (strain 8004).